We begin with the raw amino-acid sequence, 421 residues long: Hemagglutinin-esterase (421 aa).

Positions 1–16 are cleaved as a signal peptide; the sequence is MFLLPRFILVSCIIGS. Residues 7–127 form an esterase domain 1 region; the sequence is FILVSCIIGS…SNDIWMQNKG (121 aa). At 17 to 392 the chain is on the virion surface side; it reads LGFDNPPTNV…PICVYDPLPL (376 aa). S40 serves as the catalytic Nucleophile. A disulfide bridge links C44 with C65. N-linked (GlcNAc...) asparagine; by host glycosylation is found at N54, N89, N153, N236, and N301. Cystine bridges form between C113–C162, C197–C276, and C205–C249. The tract at residues 128–266 is receptor binding; it reads LFYTQVYKNM…GNYLAISNEL (139 aa). The segment at 267-379 is esterase domain 2; it reads LLTVPTKAIC…RCPTAADINT (113 aa). C307 and C312 are disulfide-bonded. N316 is a glycosylation site (N-linked (GlcNAc...) asparagine; by host). Residues D326 and H329 each act as charge relay system in the active site. C347 and C371 are disulfide-bonded. N358 carries an N-linked (GlcNAc...) asparagine; by host glycan. A helical transmembrane segment spans residues 393-413; the sequence is ILLGILLGVAVIIIVVLLLYF. Topologically, residues 414 to 421 are intravirion; that stretch reads MVENGTRL. N417 carries an N-linked (GlcNAc...) asparagine; by host glycan.

This sequence belongs to the influenza type C/coronaviruses hemagglutinin-esterase family. As to quaternary structure, homodimer; disulfide-linked. Forms a complex with the M protein in the pre-Golgi. Associates then with S-M complex to form a ternary complex S-M-HE. In terms of processing, N-glycosylated in the host RER.

The protein localises to the virion membrane. Its subcellular location is the host cell membrane. The enzyme catalyses N-acetyl-9-O-acetylneuraminate + H2O = N-acetylneuraminate + acetate + H(+). It carries out the reaction N-acetyl-4-O-acetylneuraminate + H2O = N-acetylneuraminate + acetate + H(+). In terms of biological role, structural protein that makes short spikes at the surface of the virus. Contains receptor binding and receptor-destroying activities. Mediates de-O-acetylation of N-acetyl-4-O-acetylneuraminic acid, which is probably the receptor determinant recognized by the virus on the surface of erythrocytes and susceptible cells. This receptor-destroying activity is important for virus release as it probably helps preventing self-aggregation and ensures the efficient spread of the progeny virus from cell to cell. May serve as a secondary viral attachment protein for initiating infection, the spike protein being the major one. May become a target for both the humoral and the cellular branches of the immune system. The sequence is that of Hemagglutinin-esterase from Bos taurus (Bovine).